The sequence spans 35 residues: Photosystem II reaction center protein T (35 aa).

The helical transmembrane segment at 3 to 23 (ALVYTFLLVSTLGIIFFAIFF) threads the bilayer.

This sequence belongs to the PsbT family. PSII is composed of 1 copy each of membrane proteins PsbA, PsbB, PsbC, PsbD, PsbE, PsbF, PsbH, PsbI, PsbJ, PsbK, PsbL, PsbM, PsbT, PsbY, PsbZ, Psb30/Ycf12, at least 3 peripheral proteins of the oxygen-evolving complex and a large number of cofactors. It forms dimeric complexes.

It is found in the plastid. Its subcellular location is the chloroplast thylakoid membrane. Functionally, found at the monomer-monomer interface of the photosystem II (PS II) dimer, plays a role in assembly and dimerization of PSII. PSII is a light-driven water plastoquinone oxidoreductase, using light energy to abstract electrons from H(2)O, generating a proton gradient subsequently used for ATP formation. The protein is Photosystem II reaction center protein T of Ginkgo biloba (Ginkgo).